A 338-amino-acid chain; its full sequence is Ketol-acid reductoisomerase (NADP(+)) (338 aa).

A KARI N-terminal Rossmann domain is found at 1–181 (MKVYYDKDAD…GGTRGGVIET (181 aa)). Residues 24-27 (YGSQ), Arg47, and Ser52 contribute to the NADP(+) site. His107 is an active-site residue. Position 133 (Gly133) interacts with NADP(+). Residues 182–327 (TFKEETETDL…AKLRDMMPWI (146 aa)) enclose the KARI C-terminal knotted domain. 4 residues coordinate Mg(2+): Asp190, Glu194, Glu226, and Glu230. Residue Ser251 participates in substrate binding.

It belongs to the ketol-acid reductoisomerase family. Mg(2+) is required as a cofactor.

The catalysed reaction is (2R)-2,3-dihydroxy-3-methylbutanoate + NADP(+) = (2S)-2-acetolactate + NADPH + H(+). The enzyme catalyses (2R,3R)-2,3-dihydroxy-3-methylpentanoate + NADP(+) = (S)-2-ethyl-2-hydroxy-3-oxobutanoate + NADPH + H(+). The protein operates within amino-acid biosynthesis; L-isoleucine biosynthesis; L-isoleucine from 2-oxobutanoate: step 2/4. It participates in amino-acid biosynthesis; L-valine biosynthesis; L-valine from pyruvate: step 2/4. Involved in the biosynthesis of branched-chain amino acids (BCAA). Catalyzes an alkyl-migration followed by a ketol-acid reduction of (S)-2-acetolactate (S2AL) to yield (R)-2,3-dihydroxy-isovalerate. In the isomerase reaction, S2AL is rearranged via a Mg-dependent methyl migration to produce 3-hydroxy-3-methyl-2-ketobutyrate (HMKB). In the reductase reaction, this 2-ketoacid undergoes a metal-dependent reduction by NADPH to yield (R)-2,3-dihydroxy-isovalerate. The chain is Ketol-acid reductoisomerase (NADP(+)) from Nitrosomonas europaea (strain ATCC 19718 / CIP 103999 / KCTC 2705 / NBRC 14298).